Consider the following 247-residue polypeptide: MSAKVWLVGAGPGDPELLTLKAVRALHAADVVLIDDLVNPRVLEHCPDARVITVGKRGGCRSTPQDFIHRLMLAMRAKANAWCDLRAATPCIFGRGGEEALWLRERGVEVELVNGITAGLAGATNCDIPLTLRGVSRGVTLVTAHTQDDSSLNWRALAEGGTTLVVYMGVAKLEEIRQQLLEGAMAADTPVAMIENASLPQQRECRSTLAHMHTDAQVFALKSPAILVIGSVAGAGQAASITVSASA.

Residues P12, 117-118 (TA), M168, A197, and A225 contribute to the S-adenosyl-L-homocysteine site.

The protein belongs to the precorrin methyltransferase family.

It carries out the reaction uroporphyrinogen III + 2 S-adenosyl-L-methionine = precorrin-2 + 2 S-adenosyl-L-homocysteine + H(+). The protein operates within cofactor biosynthesis; adenosylcobalamin biosynthesis; precorrin-2 from uroporphyrinogen III: step 1/1. Its pathway is porphyrin-containing compound metabolism; siroheme biosynthesis; precorrin-2 from uroporphyrinogen III: step 1/1. Functionally, catalyzes the two successive C-2 and C-7 methylation reactions involved in the conversion of uroporphyrinogen III to precorrin-2 via the intermediate formation of precorrin-1. It is a step in the biosynthesis of both cobalamin (vitamin B12) and siroheme. This Pseudomonas fluorescens protein is Uroporphyrinogen-III C-methyltransferase.